We begin with the raw amino-acid sequence, 145 residues long: uncharacterized protein (145 aa).

This sequence belongs to the methyltransferase superfamily.

Probable methyltransferase. This is an uncharacterized protein from Schizosaccharomyces pombe (strain 972 / ATCC 24843) (Fission yeast).